The chain runs to 572 residues: Hemolysin-1 (572 aa).

In terms of biological role, bacterial hemolysins are exotoxins that attack blood cell membranes and cause cell rupture by mechanisms not clearly defined. The polypeptide is Hemolysin-1 (ash1) (Aeromonas salmonicida).